A 176-amino-acid polypeptide reads, in one-letter code: Ribosome maturation factor RimM (176 aa).

One can recognise a PRC barrel domain in the interval 101–170; the sequence is EGEYFESDLI…RITVELPEGL (70 aa).

Belongs to the RimM family. As to quaternary structure, binds ribosomal protein uS19.

Its subcellular location is the cytoplasm. An accessory protein needed during the final step in the assembly of 30S ribosomal subunit, possibly for assembly of the head region. Essential for efficient processing of 16S rRNA. May be needed both before and after RbfA during the maturation of 16S rRNA. It has affinity for free ribosomal 30S subunits but not for 70S ribosomes. The protein is Ribosome maturation factor RimM of Solibacter usitatus (strain Ellin6076).